Reading from the N-terminus, the 295-residue chain is Iron-sulfur cluster carrier protein (295 aa).

Position 38-45 (G38–S45) interacts with ATP.

Belongs to the Mrp/NBP35 ATP-binding proteins family. As to quaternary structure, homodimer.

Its function is as follows. Binds and transfers iron-sulfur (Fe-S) clusters to target apoproteins. Can hydrolyze ATP. The polypeptide is Iron-sulfur cluster carrier protein (Pyrococcus abyssi (strain GE5 / Orsay)).